A 99-amino-acid polypeptide reads, in one-letter code: MAESKGRPGSASQRPTGGDKAIAGQKKQYFRRKKVCRFCVEKIDDINYKDVKMLHAFVAERGKIVPRRISGVCAPHQRRLTDAIKKARNIALLPFAASF.

A disordered region spans residues 1-25 (MAESKGRPGSASQRPTGGDKAIAGQ).

This sequence belongs to the bacterial ribosomal protein bS18 family. In terms of assembly, part of the 30S ribosomal subunit. Forms a tight heterodimer with protein bS6.

In terms of biological role, binds as a heterodimer with protein bS6 to the central domain of the 16S rRNA, where it helps stabilize the platform of the 30S subunit. The chain is Small ribosomal subunit protein bS18 from Solibacter usitatus (strain Ellin6076).